Consider the following 564-residue polypeptide: Arginine--tRNA ligase (564 aa).

Residues 136–146 carry the 'HIGH' region motif; the sequence is ANPTGPLHMGN.

This sequence belongs to the class-I aminoacyl-tRNA synthetase family. As to quaternary structure, monomer.

It is found in the cytoplasm. It catalyses the reaction tRNA(Arg) + L-arginine + ATP = L-arginyl-tRNA(Arg) + AMP + diphosphate. The polypeptide is Arginine--tRNA ligase (Ruminiclostridium cellulolyticum (strain ATCC 35319 / DSM 5812 / JCM 6584 / H10) (Clostridium cellulolyticum)).